We begin with the raw amino-acid sequence, 485 residues long: MIKDLENEIYKSRKNLNNILVLFDYIDLSNHSIDEVNDAAAALCRVYCYLSRNGLLKRPKEDDSSANAQVKNWVCDNYINYTEKLTEIFSMANVEALQVSFLTMTMRLCKAESQMDENGTFRNQFYIRFCLELLSSSQLSDICIKDFVTSYLVPYDDVRFFFYKNSKKVISSLIESSKTDDPMANLDIVAFNTIRILSAIPSPLPSSSTSSWADEPSPSSTETSSIKRAFQESWLSALSLPLSVNLYKQVLNVIHKRVIPFLQKPNLLMDFLTDAYNSHHAVSLLALNGLFTLMISHNLDYPLFYPKLYALLDRNLLYLKTRSRFFRLLDLFLSSTHLPATLIASFIKRLARLALTAPPGAIAIVIPFIYNCLQRHPTCMQMLHRSSAESGDSFDFDQPDPLLTGAIESSLWELSTLQNHYYSNIASLASIMSQKFTKPRYELEDFLDHGYATMCDAELRRPLKNEPPIEFEKRTLASGLEKSWI.

A run of 3 helical transmembrane segments spans residues Leu284–Phe304, Leu328–Lys348, and Leu353–Leu373.

Belongs to the CBF/MAK21 family.

The protein resides in the membrane. This is an uncharacterized protein from Schizosaccharomyces pombe (strain 972 / ATCC 24843) (Fission yeast).